Consider the following 329-residue polypeptide: Transcription factor MYB2 (329 aa).

2 consecutive HTH myb-type domains span residues 17 to 69 (GGDL…LNYL) and 70 to 124 (RPDL…QKHA). 2 consecutive DNA-binding regions (H-T-H motif) follow at residues 45-69 (WNSL…LNYL) and 97-120 (WSKI…RTRV). Low complexity-rich tracts occupy residues 155–166 (AAAGQQQQQEGG) and 217–235 (LSST…GAGA). 2 disordered regions span residues 155–189 (AAAG…PELP) and 206–242 (GAQS…WPTQ).

As to expression, highly expressed in leaves. Expressed in roots and shoots. Expressed at low levels in flowers.

It localises to the nucleus. Functionally, transcription factor involved in abiotic stress responses. Plays a regulatory role in tolerance to salt, cold, and drought stresses. Positively regulates the expression of genes involved in proline synthesis and transport, and genes involved in reactive oxygen species (ROS) scavenging such as peroxidase, superoxide dismutase and catalase during salt stress. Transactivates stress-related genes, including LEA3, RAB16A and DREB2A during salt stress. This Oryza sativa subsp. japonica (Rice) protein is Transcription factor MYB2.